The chain runs to 562 residues: Calmodulin-binding protein 60 F (562 aa).

Positions 1-22 (MENSMNNRGHGHNQEHADNLPE) are disordered. The calmodulin-binding stretch occupies residues 5-84 (MNNRGHGHNQ…STSRSTEPNK (80 aa)). A compositionally biased stretch (basic and acidic residues) spans 12–22 (HNQEHADNLPE). The segment at 154–273 (EDDKDWTREH…ALHKKLLKSN (120 aa)) is DNA-binding.

It belongs to the plant ACBP60 protein family. Interacts with calmodulin (CaM).

Its subcellular location is the nucleus. Functionally, transcription activator that binds DNA in a sequence-specific manner, likely 5'-GAAATTTTGG-3', to promote the expression of target genes. The chain is Calmodulin-binding protein 60 F from Arabidopsis thaliana (Mouse-ear cress).